A 932-amino-acid polypeptide reads, in one-letter code: Transcriptional regulatory protein DagR (932 aa).

The region spanning L111–A343 is the Sigma-54 factor interaction domain. Residues G141–T148 and A210–E219 contribute to the ATP site. The 106-residue stretch at R462–I567 folds into the PRD 1 domain. Phosphohistidine is present on H497. One can recognise a PTS EIIA type-4 domain in the interval D572–L708. H580 functions as the Tele-phosphohistidine intermediate in the catalytic mechanism. A PRD 2 domain is found at L835–S932. At H870 the chain carries Phosphohistidine.

Involved in the regulation of the catabolism of D-glucosaminate. This Salmonella typhimurium (strain 14028s / SGSC 2262) protein is Transcriptional regulatory protein DagR (dgaR).